The primary structure comprises 334 residues: Serine/Arginine-related protein 53 (334 aa).

Basic and acidic residues predominate over residues 1–13 (MGRRSSDTEEESR). Disordered regions lie at residues 1 to 179 (MGRR…HLPP), 198 to 220 (DEALKAKERSEEEAKRRKEEDQA), and 246 to 290 (RSSK…SIPT). The segment covering 14–24 (SKRKKKHRRRS) has biased composition (basic residues). The span at 44–62 (PRSDSRSWSRDRQLRSHSY) shows a compositional bias: basic and acidic residues. Residues 78 to 118 (SRRKRSRSRSRGRGKPYRVQRSRSKSRTRRSRSRPRPRSHS) are compositionally biased toward basic residues. Basic and acidic residues-rich tracts occupy residues 132-166 (RSRDRDRRKVRDKEKREKEKDKGKDKEVHSIKRGD), 198-218 (DEALKAKERSEEEAKRRKEED), and 247-256 (SSKDVKKAVE). Residues 180–236 (AEQAKARLQLVLEAAAKADEALKAKERSEEEAKRRKEEDQATLVEQVKRVKEIEAIE) adopt a coiled-coil conformation. A compositionally biased stretch (low complexity) spans 265 to 278 (AASGPASAAAEPPS).

Interacts (via Arg/Ser-rich domain) with LUC7L3, RBM39 and RSF1. Phosphorylated.

It is found in the nucleus. Its subcellular location is the nucleus speckle. It localises to the cytoplasm. Functionally, plays a role in pre-mRNA splicing. Involved in both constitutive and alternative pre-mRNA splicing. May have a role in the recognition of the 3' splice site during the second step of splicing. The sequence is that of Serine/Arginine-related protein 53 (Rsrc1) from Mus musculus (Mouse).